Here is a 192-residue protein sequence, read N- to C-terminus: Signal peptidase complex catalytic subunit SEC11C (192 aa).

Residues 1 to 28 are Cytoplasmic-facing; it reads MVRAGAVGTHLPTSSLDIFGDLRKMNKR. Residues 29 to 48 traverse the membrane as a helical; Signal-anchor for type II membrane protein segment; that stretch reads QLYYQVLNFAMIVSSALMIW. Over 49 to 192 the chain is Lumenal; sequence KGLIVLTGSE…GAYVLLKRES (144 aa). Residues serine 68, histidine 108, and aspartate 134 each act as charge relay system in the active site. The tract at residues 177 to 188 is C-terminal short (CTS) helix; it reads ALVAVMGAYVLL.

It belongs to the peptidase S26B family. As to quaternary structure, component of the signal peptidase complex paralog C (SPC-C) composed of a catalytic subunit SEC11C and three accessory subunits SPCS1, SPCS2 and SPCS3. Within the complex, interacts with SPCS2 and SPCS3. The complex induces a local thinning of the ER membrane which is used to measure the length of the signal peptide (SP) h-region of protein substrates. This ensures the selectivity of the complex towards h-regions shorter than 18-20 amino acids. In terms of processing, may undergo processing at the N-terminus.

It localises to the endoplasmic reticulum membrane. It catalyses the reaction Cleavage of hydrophobic, N-terminal signal or leader sequences from secreted and periplasmic proteins.. Functionally, catalytic component of the signal peptidase complex (SPC) which catalyzes the cleavage of N-terminal signal sequences from nascent proteins as they are translocated into the lumen of the endoplasmic reticulum. Specifically cleaves N-terminal signal peptides that contain a hydrophobic alpha-helix (h-region) shorter than 18-20 amino acids. The protein is Signal peptidase complex catalytic subunit SEC11C (Sec11c) of Rattus norvegicus (Rat).